Reading from the N-terminus, the 152-residue chain is Aspartate 1-decarboxylase (152 aa).

Ser-24 acts as the Schiff-base intermediate with substrate; via pyruvic acid in catalysis. Pyruvic acid (Ser) is present on Ser-24. Thr-56 is a substrate binding site. Residue Tyr-57 is the Proton donor of the active site. Residue 72–74 (GAA) coordinates substrate.

It belongs to the PanD family. Heterooctamer of four alpha and four beta subunits. Requires pyruvate as cofactor. In terms of processing, is synthesized initially as an inactive proenzyme, which is activated by self-cleavage at a specific serine bond to produce a beta-subunit with a hydroxyl group at its C-terminus and an alpha-subunit with a pyruvoyl group at its N-terminus.

It localises to the cytoplasm. It catalyses the reaction L-aspartate + H(+) = beta-alanine + CO2. It functions in the pathway cofactor biosynthesis; (R)-pantothenate biosynthesis; beta-alanine from L-aspartate: step 1/1. Catalyzes the pyruvoyl-dependent decarboxylation of aspartate to produce beta-alanine. The polypeptide is Aspartate 1-decarboxylase (Methylobacterium nodulans (strain LMG 21967 / CNCM I-2342 / ORS 2060)).